Here is a 368-residue protein sequence, read N- to C-terminus: Homoserine O-acetyltransferase (368 aa).

An AB hydrolase-1 domain is found at 41-352 (NVILITHALS…DYGHDSFLVE (312 aa)). Residue Ser-147 is the Nucleophile of the active site. A substrate-binding site is contributed by Arg-219. Catalysis depends on residues Asp-313 and His-346. Asp-347 is a substrate binding site.

The protein belongs to the AB hydrolase superfamily. MetX family. Homodimer.

The protein resides in the cytoplasm. The enzyme catalyses L-homoserine + acetyl-CoA = O-acetyl-L-homoserine + CoA. It participates in amino-acid biosynthesis; L-methionine biosynthesis via de novo pathway; O-acetyl-L-homoserine from L-homoserine: step 1/1. In terms of biological role, transfers an acetyl group from acetyl-CoA to L-homoserine, forming acetyl-L-homoserine. The sequence is that of Homoserine O-acetyltransferase from Nautilia profundicola (strain ATCC BAA-1463 / DSM 18972 / AmH).